Reading from the N-terminus, the 53-residue chain is UPF0391 membrane protein msr4317 (53 aa).

2 helical membrane-spanning segments follow: residues 4–24 and 33–53; these read WIIILLIVAAAASLLGMPALA and ILIGIVLVIFLLVVLGIFAVT.

It belongs to the UPF0391 family.

It localises to the cell membrane. This is UPF0391 membrane protein msr4317 from Mesorhizobium japonicum (strain LMG 29417 / CECT 9101 / MAFF 303099) (Mesorhizobium loti (strain MAFF 303099)).